A 1040-amino-acid chain; its full sequence is uncharacterized protein (1040 aa).

Residues 403–588 (RLEESSKKGG…YSLIKFLRIK (186 aa)) form the Helicase ATP-binding domain. Position 416 to 423 (416 to 423 (DDMGLGKT)) interacts with ATP. The RING-type zinc finger occupies 746-798 (CSLCMDVVAELLIIVPCGHFLCRECLTHVITSSEDMAKQTSNENISPKCSVCE). A Helicase C-terminal domain is found at 866–1032 (KIEKALNAVK…ISRLNTKELS (167 aa)).

The protein belongs to the SNF2/RAD54 helicase family.

Its subcellular location is the nucleus. This is an uncharacterized protein from Schizosaccharomyces pombe (strain 972 / ATCC 24843) (Fission yeast).